We begin with the raw amino-acid sequence, 444 residues long: Structure-specific endonuclease subunit SLX1 (444 aa).

Positions 23–105 (AFYCCYLLRS…QNTKVSRHAD (83 aa)) constitute a GIY-YIG domain. The SLX1-type zinc-finger motif lies at 240–295 (CGVCKQRLILQHDIIAVCSHSSCHCAAHLSCLSSHFLKDKDSDSELIPREGTCPAC). Disordered stretches follow at residues 323–355 (RRRRQAGTPKGQGLKSVRGRGRGHSEDESDALQ) and 386–444 (AHRP…EVIE).

It belongs to the SLX1 family. In terms of assembly, forms a heterodimer with SLX4. The cofactor is a divalent metal cation.

It is found in the nucleus. Catalytic subunit of the SLX1-SLX4 structure-specific endonuclease that resolves DNA secondary structures generated during DNA repair and recombination. Has endonuclease activity towards branched DNA substrates, introducing single-strand cuts in duplex DNA close to junctions with ss-DNA. The polypeptide is Structure-specific endonuclease subunit SLX1 (Paracoccidioides brasiliensis (strain Pb18)).